The following is a 124-amino-acid chain: Kinocilin (124 aa).

Transmembrane regions (helical) follow at residues 13-33 and 40-60; these read LQLACVALGLVAGSIIIGISV and MGGVFIGAAVLGLLILAYPFL. The segment at 80–124 is disordered; it reads PHPGADHGEGRSSTNGNKEGARSSLSTVSRTLEKLKPGTRGAEEC. Residues 90–109 are compositionally biased toward polar residues; it reads RSSTNGNKEGARSSLSTVSR. The segment covering 110-124 has biased composition (basic and acidic residues); the sequence is TLEKLKPGTRGAEEC.

It localises to the membrane. Its function is as follows. May play a role in stabilizing dense microtubular networks or in vesicular trafficking. The chain is Kinocilin (KNCN) from Homo sapiens (Human).